The chain runs to 538 residues: Phospho-2-dehydro-3-deoxyheptonate aldolase 1, chloroplastic (538 aa).

The N-terminal 74 residues, 1–74, are a transit peptide targeting the chloroplast; it reads MALSSTSTTN…KPSKSSPPAA (74 aa). The interval 55–82 is disordered; the sequence is DSNKIPIVSDKPSKSSPPAATATTAPAP. The segment covering 68–82 has biased composition (low complexity); the sequence is KSSPPAATATTAPAP. Threonine 75 carries the post-translational modification Blocked amino end (Thr).

The protein belongs to the class-II DAHP synthase family.

It is found in the plastid. The protein localises to the chloroplast. The catalysed reaction is D-erythrose 4-phosphate + phosphoenolpyruvate + H2O = 7-phospho-2-dehydro-3-deoxy-D-arabino-heptonate + phosphate. The protein operates within metabolic intermediate biosynthesis; chorismate biosynthesis; chorismate from D-erythrose 4-phosphate and phosphoenolpyruvate: step 1/7. Its activity is regulated as follows. Activation by tryptophan (a hysteretic factor). The chain is Phospho-2-dehydro-3-deoxyheptonate aldolase 1, chloroplastic (SHKA) from Solanum tuberosum (Potato).